The primary structure comprises 134 residues: Profilin-2 (134 aa).

Cys13 and Cys118 form a disulfide bridge. An Involved in PIP2 interaction motif is present at residues 84–100 (AVIRGKKGSGGITIKKT). The residue at position 114 (Thr114) is a Phosphothreonine.

Belongs to the profilin family. In terms of assembly, occurs in many kinds of cells as a complex with monomeric actin in a 1:1 ratio. Phosphorylated by MAP kinases.

The protein localises to the cytoplasm. It is found in the cytoskeleton. In terms of biological role, binds to actin and affects the structure of the cytoskeleton. At high concentrations, profilin prevents the polymerization of actin, whereas it enhances it at low concentrations. In Olea europaea (Common olive), this protein is Profilin-2.